We begin with the raw amino-acid sequence, 525 residues long: Exoglucanase 1 (525 aa).

The N-terminal stretch at 1–18 is a signal peptide; the sequence is MRTAKFATLAALVASAAA. The segment at 19 to 467 is catalytic; that stretch reads QQACSLTTER…AGNGGNNGGN (449 aa). Glu-231 (nucleophile) is an active-site residue. Glu-236 (proton donor) is an active-site residue. N-linked (GlcNAc...) asparagine glycosylation is present at Asn-289. The disordered stretch occupies residues 454–492; it reads GLPGAGNGGNNGGNPPPPTTTTSSAPATTTTASAGPKAG. Residues 456–465 show a composition bias toward gly residues; it reads PGAGNGGNNG. Residues 468-489 are linker; sequence PPPPTTTTSSAPATTTTASAGP. A compositionally biased stretch (low complexity) spans 473 to 489; that stretch reads TTTSSAPATTTTASAGP. The region spanning 489 to 525 is the CBM1 domain; it reads PKAGRWQQCGGIGFTGPTQCEEPYICTKLNDWYSQCL. Cystine bridges form between Cys-497/Cys-514 and Cys-508/Cys-524.

It belongs to the glycosyl hydrolase 7 (cellulase C) family.

It catalyses the reaction Hydrolysis of (1-&gt;4)-beta-D-glucosidic linkages in cellulose and cellotetraose, releasing cellobiose from the non-reducing ends of the chains.. Its function is as follows. The biological conversion of cellulose to glucose generally requires three types of hydrolytic enzymes: (1) Endoglucanases which cut internal beta-1,4-glucosidic bonds; (2) Exocellobiohydrolases that cut the disaccharide cellobiose from the non-reducing end of the cellulose polymer chain; (3) Beta-1,4-glucosidases which hydrolyze the cellobiose and other short cello-oligosaccharides to glucose. The chain is Exoglucanase 1 (CBH-1) from Humicola insolens (Soft-rot fungus).